We begin with the raw amino-acid sequence, 398 residues long: Acetate kinase (398 aa).

N7 contributes to the Mg(2+) binding site. K14 lines the ATP pocket. R91 serves as a coordination point for substrate. The active-site Proton donor/acceptor is the D148. Residues H208–G212, D283–R285, and G331–N335 contribute to the ATP site. E384 lines the Mg(2+) pocket.

It belongs to the acetokinase family. In terms of assembly, homodimer. Mg(2+) is required as a cofactor. Requires Mn(2+) as cofactor.

Its subcellular location is the cytoplasm. It carries out the reaction acetate + ATP = acetyl phosphate + ADP. It participates in metabolic intermediate biosynthesis; acetyl-CoA biosynthesis; acetyl-CoA from acetate: step 1/2. In terms of biological role, catalyzes the formation of acetyl phosphate from acetate and ATP. Can also catalyze the reverse reaction. This is Acetate kinase from Halothermothrix orenii (strain H 168 / OCM 544 / DSM 9562).